A 553-amino-acid chain; its full sequence is Capsid protein VP1 (553 aa).

It belongs to the microviridae F protein family.

The protein localises to the virion. The protein resides in the host cytoplasm. Assembles to form an icosahedral capsid with a T=1 symmetry. The polypeptide is Capsid protein VP1 (Spiroplasma virus 4 (SpV4)).